Consider the following 156-residue polypeptide: MGRSISVSFGLLVVFLSLSGTGADQDCLPGWSSHEGHCYKVFNLDKTWEDAEKFCTEQGNSGHLVSIDSKKETNFVAELVSPNIKETRRTDFVWIGLRAEDKRQHCSSEWSDGSSINYQNWIEAESKKCLGLEKQTRYRKWVNLNCGKPYRFTCEI.

A signal peptide spans 1-23; that stretch reads MGRSISVSFGLLVVFLSLSGTGA. 3 cysteine pairs are disulfide-bonded: C27–C38, C55–C154, and C129–C146. Residues 34–155 enclose the C-type lectin domain; that stretch reads HEGHCYKVFN…CGKPYRFTCE (122 aa).

This sequence belongs to the snaclec family. As to quaternary structure, heterodimer; disulfide-linked. Expressed by the venom gland.

Its subcellular location is the secreted. Its function is as follows. Interferes with one step of hemostasis (modulation of platelet aggregation, or coagulation cascade, for example). This Macrovipera lebetinus (Levantine viper) protein is Snaclec A6.